The sequence spans 366 residues: Anhydro-N-acetylmuramic acid kinase (366 aa).

12–19 is a binding site for ATP; sequence GTSMDGAD.

Belongs to the anhydro-N-acetylmuramic acid kinase family.

It catalyses the reaction 1,6-anhydro-N-acetyl-beta-muramate + ATP + H2O = N-acetyl-D-muramate 6-phosphate + ADP + H(+). The protein operates within amino-sugar metabolism; 1,6-anhydro-N-acetylmuramate degradation. It participates in cell wall biogenesis; peptidoglycan recycling. Functionally, catalyzes the specific phosphorylation of 1,6-anhydro-N-acetylmuramic acid (anhMurNAc) with the simultaneous cleavage of the 1,6-anhydro ring, generating MurNAc-6-P. Is required for the utilization of anhMurNAc either imported from the medium or derived from its own cell wall murein, and thus plays a role in cell wall recycling. The sequence is that of Anhydro-N-acetylmuramic acid kinase from Neisseria meningitidis serogroup C (strain 053442).